We begin with the raw amino-acid sequence, 263 residues long: 3'-5' ssDNA/RNA exonuclease TatD (263 aa).

Residues Glu-91, His-127, and His-152 each contribute to the a divalent metal cation site.

It belongs to the metallo-dependent hydrolases superfamily. TatD-type hydrolase family. TatD subfamily. In terms of assembly, monomer. Mg(2+) is required as a cofactor.

The protein resides in the cytoplasm. 3'-5' exonuclease that prefers single-stranded DNA and RNA. May play a role in the H(2)O(2)-induced DNA damage repair. This chain is 3'-5' ssDNA/RNA exonuclease TatD, found in Citrobacter rodentium (strain ICC168) (Citrobacter freundii biotype 4280).